The chain runs to 389 residues: MNNIVHKLKTLVLNEAFGGVLLIVCTLLALLVQNGSFSEHYREFLNLKVGFSVGEFELNKPFLLWINDGLISIFFFAIGLELKKEFLHGDFKNPKNIVLPFMAALGGILIPAMLFALVNIGDAYTLKGWAIPTATDTAFALAILMMCGKHIPSSLKIFLLSLAIFDDVGAILIIAIFYTTKLSIVAFVVAGLAILAMLILNLLGITRKSFYFICSVILWISVLKSGVHATLAGIVTAFFIPMQTKNGEAFLEEIYESLKFWIAFIILPLFAFANAGVNLSNIDIGAIFSGVSIGIFLGLFVGKQVGVFLFSYLAIRFKFAALPQGSNLKQLYGVCILTGIGFTMSLFIDGLAYEVSDIFNYADNLAILIASFCSGIWGFIYLKFFTTRS.

Helical transmembrane passes span Val12–Val32, Phe62–Leu82, Ile97–Leu117, Gly128–Gly148, Ile157–Phe177, Ile184–Gly204, Ile220–Ile240, Phe260–Ser280, Ile282–Gly302, Leu331–Leu351, and Leu365–Phe385.

This sequence belongs to the NhaA Na(+)/H(+) (TC 2.A.33) antiporter family.

Its subcellular location is the cell inner membrane. The catalysed reaction is Na(+)(in) + 2 H(+)(out) = Na(+)(out) + 2 H(+)(in). Na(+)/H(+) antiporter that extrudes sodium in exchange for external protons. This is Na(+)/H(+) antiporter NhaA 1 from Campylobacter jejuni (strain RM1221).